The following is a 285-amino-acid chain: (3S)-malyl-CoA thioesterase (285 aa).

Substrate-binding residues include R70 and E122. Residues E122 and D148 each contribute to the Mg(2+) site.

It belongs to the HpcH/HpaI aldolase family. As to quaternary structure, homodimer or homotrimer. Mg(2+) is required as a cofactor.

It carries out the reaction (S)-malyl-CoA + H2O = (S)-malate + CoA + H(+). Its function is as follows. Catalyzes the hydrolysis of (3S)-malyl-CoA to (3S)-malate and free CoA. Inactive towards beta-methylmalyl-CoA and other CoA esters. This Cereibacter sphaeroides (strain KD131 / KCTC 12085) (Rhodobacter sphaeroides) protein is (3S)-malyl-CoA thioesterase.